The following is a 309-amino-acid chain: Homoserine O-succinyltransferase (309 aa).

The Acyl-thioester intermediate role is filled by Cys-142. Residues Lys-163 and Ser-192 each contribute to the substrate site. His-235 functions as the Proton acceptor in the catalytic mechanism. Glu-237 is a catalytic residue. Arg-249 contacts substrate.

This sequence belongs to the MetA family.

Its subcellular location is the cytoplasm. It catalyses the reaction L-homoserine + succinyl-CoA = O-succinyl-L-homoserine + CoA. Its pathway is amino-acid biosynthesis; L-methionine biosynthesis via de novo pathway; O-succinyl-L-homoserine from L-homoserine: step 1/1. Its function is as follows. Transfers a succinyl group from succinyl-CoA to L-homoserine, forming succinyl-L-homoserine. This is Homoserine O-succinyltransferase from Erwinia tasmaniensis (strain DSM 17950 / CFBP 7177 / CIP 109463 / NCPPB 4357 / Et1/99).